The primary structure comprises 258 residues: MNSILERIAKHKLEEVAVAKKNKPLHVLSKQQPGEMRDFITALKSNTSPAVIAEIKKASPSKGLIRKDFNVAEIAKIYTQNGARCLSVLTDIEFFQGHPDYLALAKSKTTLPVLRKDFIIDSYQIYESLVLGADCILLIVALLDDVQLMDFCQLAQELKMSVLVESHTQDELERALRLPTPLIGINNRSLHNFKTDIQLSIQLKQFVPKDKIIITESGINTREDIKLMQSHGINAFLIGESLMRADNIGKALQKLMTD.

This sequence belongs to the TrpC family.

The catalysed reaction is 1-(2-carboxyphenylamino)-1-deoxy-D-ribulose 5-phosphate + H(+) = (1S,2R)-1-C-(indol-3-yl)glycerol 3-phosphate + CO2 + H2O. It participates in amino-acid biosynthesis; L-tryptophan biosynthesis; L-tryptophan from chorismate: step 4/5. The sequence is that of Indole-3-glycerol phosphate synthase from Legionella pneumophila (strain Paris).